We begin with the raw amino-acid sequence, 380 residues long: Probable inactive dehydrogenase easA (380 aa).

Residues 25–27 (PMT), Ala-60, Gln-102, and His-171 contribute to the FMN site. 2 residues coordinate substrate: His-171 and Asn-174. Residues Lys-223, Gly-299, 324-325 (GR), and Arg-325 each bind FMN. Substrate is bound at residue Tyr-352.

Belongs to the NADH:flavin oxidoreductase/NADH oxidase family.

In terms of biological role, probable inactive dehydrogenase; part of the gene cluster that mediates the biosynthesis of fungal ergot alkaloid. DmaW catalyzes the first step of ergot alkaloid biosynthesis by condensing dimethylallyl diphosphate (DMAP) and tryptophan to form 4-dimethylallyl-L-tryptophan. The second step is catalyzed by the methyltransferase easF that methylates 4-dimethylallyl-L-tryptophan in the presence of S-adenosyl-L-methionine, resulting in the formation of 4-dimethylallyl-L-abrine. The catalase easC and the FAD-dependent oxidoreductase easE then transform 4-dimethylallyl-L-abrine to chanoclavine-I which is further oxidized by easD in the presence of NAD(+), resulting in the formation of chanoclavine-I aldehyde. Agroclavine dehydrogenase easG then mediates the conversion of chanoclavine-I aldehyde to agroclavine via a non-enzymatic adduct reaction: the substrate is an iminium intermediate that is formed spontaneously from chanoclavine-I aldehyde in the presence of glutathione. The presence of easA is not required to complete this reaction. Further conversion of agroclavine to paspalic acid is a two-step process involving oxidation of agroclavine to elymoclavine and of elymoclavine to paspalic acid, the second step being performed by the elymoclavine oxidase cloA. Paspalic acid is then further converted to D-lysergic acid. Ergopeptines are assembled from D-lysergic acid and three different amino acids by the D-lysergyl-peptide-synthetases composed each of a monomudular and a trimodular nonribosomal peptide synthetase subunit. LpsB and lpsC encode the monomodular subunits responsible for D-lysergic acid activation and incorporation into the ergopeptine backbone. LpsA1 and A2 subunits encode the trimodular nonribosomal peptide synthetase assembling the tripeptide portion of ergopeptines. LpsA1 is responsible for formation of the major ergopeptine, ergotamine, and lpsA2 for alpha-ergocryptine, the minor ergopeptine of the total alkaloid mixture elaborated by C.purpurea. D-lysergyl-tripeptides are assembled by the nonribosomal peptide synthetases and released as N-(D-lysergyl-aminoacyl)-lactams. Cyclolization of the D-lysergyl-tripeptides is performed by the Fe(2+)/2-ketoglutarate-dependent dioxygenase easH which introduces a hydroxyl group into N-(D-lysergyl-aminoacyl)-lactam at alpha-C of the aminoacyl residue followed by spontaneous condensation with the terminal lactam carbonyl group. The polypeptide is Probable inactive dehydrogenase easA (Claviceps purpurea (strain 20.1) (Ergot fungus)).